The chain runs to 244 residues: Cytochrome c1 (244 aa).

A signal peptide spans 1 to 19 (MRKLILATFLLLAPTALLA). 3 residues coordinate heme c: Cys50, Cys53, and His54. The chain crosses the membrane as a helical span at residues 220-240 (YVLLFLGFLFILAYLLKKEYW).

In terms of assembly, the main subunits of complex b-c1 are: cytochrome b, cytochrome c1 and the Rieske protein. Post-translationally, binds 1 heme c group covalently per subunit.

Its subcellular location is the cell membrane. Functionally, component of the ubiquinol-cytochrome c reductase complex (complex III or cytochrome b-c1 complex), which is a respiratory chain that generates an electrochemical potential coupled to ATP synthesis. c1 functions as an electron donor to cytochrome c. This is Cytochrome c1 (petC) from Allochromatium vinosum (strain ATCC 17899 / DSM 180 / NBRC 103801 / NCIMB 10441 / D) (Chromatium vinosum).